Here is a 579-residue protein sequence, read N- to C-terminus: L-arabinonate dehydratase (579 aa).

Cys59 contributes to the [2Fe-2S] cluster binding site. Glu91 is a Mg(2+) binding site. Cys127 lines the [2Fe-2S] cluster pocket. Asp128 lines the Mg(2+) pocket. Cys200 is a [2Fe-2S] cluster binding site. Glu453 serves as a coordination point for Mg(2+).

It belongs to the IlvD/Edd family. Homotetramer. [2Fe-2S] cluster serves as cofactor. Mg(2+) is required as a cofactor.

The catalysed reaction is L-arabinonate = 2-dehydro-3-deoxy-L-arabinonate + H2O. It catalyses the reaction D-galactonate = 2-dehydro-3-deoxy-D-galactonate + H2O. The enzyme catalyses D-fuconate = 2-dehydro-3-deoxy-D-fuconate + H2O. It functions in the pathway carbohydrate metabolism. Its function is as follows. Catalyzes the dehydration of L-arabinonate to 2-dehydro-3-deoxy-L-arabinonate during L-arabinose degradation. Can also dehydrate D-galactonate and D-fuconate with good catalytic efficiency. Has weak activity with D-xylonate and D-gluconate. This Rhizobium leguminosarum bv. trifolii (strain WSM2304) protein is L-arabinonate dehydratase.